Consider the following 227-residue polypeptide: Endo-1,4-beta-xylanase 2 (227 aa).

Residues 1 to 36 (MVSIKSVLAAATAVSSALAAPFDFVPRDNSTALQAR) form the signal peptide. The N-linked (GlcNAc...) asparagine glycan is linked to asparagine 29. The 189-residue stretch at 37-225 (QVTPNAEGWH…SSGESDIYVQ (189 aa)) folds into the GH11 domain. Glutamate 121 acts as the Nucleophile in catalysis. The active-site Proton donor is the glutamate 212.

Belongs to the glycosyl hydrolase 11 (cellulase G) family.

It is found in the secreted. The enzyme catalyses Endohydrolysis of (1-&gt;4)-beta-D-xylosidic linkages in xylans.. It participates in glycan degradation; xylan degradation. Functionally, endo-1,4-beta-xylanase involved in the hydrolysis of xylan, a major structural heterogeneous polysaccharide found in plant biomass representing the second most abundant polysaccharide in the biosphere, after cellulose. This is Endo-1,4-beta-xylanase 2 (xyn2) from Humicola insolens (Soft-rot fungus).